Reading from the N-terminus, the 183-residue chain is Probable chorismate pyruvate-lyase (183 aa).

3 residues coordinate substrate: Arg79, Leu115, and Glu168.

The protein belongs to the UbiC family.

It localises to the cytoplasm. The enzyme catalyses chorismate = 4-hydroxybenzoate + pyruvate. Its pathway is cofactor biosynthesis; ubiquinone biosynthesis. Removes the pyruvyl group from chorismate, with concomitant aromatization of the ring, to provide 4-hydroxybenzoate (4HB) for the ubiquinone pathway. The chain is Probable chorismate pyruvate-lyase from Chromohalobacter salexigens (strain ATCC BAA-138 / DSM 3043 / CIP 106854 / NCIMB 13768 / 1H11).